The following is a 183-amino-acid chain: Large ribosomal subunit protein uL6 (183 aa).

It belongs to the universal ribosomal protein uL6 family. Part of the 50S ribosomal subunit.

Its function is as follows. This protein binds to the 23S rRNA, and is important in its secondary structure. It is located near the subunit interface in the base of the L7/L12 stalk, and near the tRNA binding site of the peptidyltransferase center. The chain is Large ribosomal subunit protein uL6 from Parabacteroides distasonis (strain ATCC 8503 / DSM 20701 / CIP 104284 / JCM 5825 / NCTC 11152).